The primary structure comprises 208 residues: MKARLPLLVGVTGGIGSGKSTVCAMLAEMGCELFEADRIAKELQVEDPEVIRGIEKLFGPDVYSRDASGKLLIDRKAIAAIVFSEPEKLAALNRLIHPKVREAFVNEVKRCAREGKRILCKEAAILFEAGADRDLDRIIVVAANDGLRLARAVARGLACEEARKRMQAQWPQEKLVERAHYVIFNDGTLDELRSQVEQVYQSLLTVVE.

The DPCK domain occupies 8 to 208 (LVGVTGGIGS…VYQSLLTVVE (201 aa)). 16 to 21 (GSGKST) contributes to the ATP binding site.

This sequence belongs to the CoaE family.

The protein resides in the cytoplasm. It catalyses the reaction 3'-dephospho-CoA + ATP = ADP + CoA + H(+). Its pathway is cofactor biosynthesis; coenzyme A biosynthesis; CoA from (R)-pantothenate: step 5/5. In terms of biological role, catalyzes the phosphorylation of the 3'-hydroxyl group of dephosphocoenzyme A to form coenzyme A. This is Dephospho-CoA kinase from Chlorobaculum tepidum (strain ATCC 49652 / DSM 12025 / NBRC 103806 / TLS) (Chlorobium tepidum).